The chain runs to 780 residues: MSVDDLPPSSASAVTPLGSSVIPIVNKLQDIFAQLGSQSTIALPQVAVVGSQSSGKSSVLEALVGRDFLPRGNDICTRRPLRLQLVQTKPSSDGGSDEEWGEFLHHDPVRRIYDFSEIRREIEAETNRVSGENKGVSDIPIGLKIFSPNVLDISLVDLPGITKVPVGDQPSDIEARIRTMILTYIKEPSCLILAVSPANTDLANSDALQIAGNADPDGHRTIGVITKLDIMDRGTDARNHLLGKTIPLRLGYVGVVNRSQEDILMNRSIKDALVAEEKFFRSRPVYSGLTDRLGVPQLAKKLNQVLVQHIKALLPSLKSRINNALFATAKEYESYGDITESRGGQGALLLSFITKYCEAYSSTLEGKSKEMSTSELSGGARILYIFQSVFVKSLEEVDPCEDLTADDIRTAIQNATGPRSALFVPDVPFEVLVRRQISRLLDPSLQCARFIFDELVKISHQCMMKELQRFPVLQKRMDEVIGNFLREGLEPSQAMIRDLIEMEMDYINTSHPNFIGGTKAVEQAMQTVKSSRIPHPVARPRDTVEPERTASSGSQIKTRSFLGRQANGIITDQAVPTAADAERPAPAGSTSWSGFSSIFRGSDGQAAAKNNLLNKPFSETTQEVYQNLSTIYLKEPPTILKSSETHSEQESVEIEITKLLLKSYYDIVRKNVEDLVPKAIMHFLVNYTKRELHNVFIEKLYRENLIEELLKEPDELAIKRKRTQETLRILQQANRTLDELPLEAESVERGYKIGSEAKHEELPGTRRSRTETNGNGRLHM.

Position 2 is an N-acetylserine (Ser2). The Dynamin-type G domain occupies 40–315; that stretch reads TIALPQVAVV…LVQHIKALLP (276 aa). The interval 50-57 is G1 motif; sequence GSQSSGKS. Residue 50-57 coordinates GTP; it reads GSQSSGKS. The tract at residues 76 to 78 is G2 motif; sequence CTR. A G3 motif region spans residues 157 to 160; it reads DLPG. Residues 157 to 161 and 226 to 229 each bind GTP; these read DLPGI and TKLD. Residues 226–229 are G4 motif; the sequence is TKLD. The segment at 256 to 259 is G5 motif; it reads VNRS. Disordered stretches follow at residues 536–558 and 573–592; these read PVAR…QIKT and QAVP…STSW. A compositionally biased stretch (basic and acidic residues) spans 539 to 548; it reads RPRDTVEPER. Polar residues predominate over residues 549–558; it reads TASSGSQIKT. The GED domain occupies 654–745; the sequence is IEITKLLLKS…TLDELPLEAE (92 aa). A compositionally biased stretch (basic and acidic residues) spans 753-770; the sequence is IGSEAKHEELPGTRRSRT. Residues 753–780 are disordered; it reads IGSEAKHEELPGTRRSRTETNGNGRLHM. Residues 771–780 show a composition bias toward polar residues; that stretch reads ETNGNGRLHM.

Belongs to the TRAFAC class dynamin-like GTPase superfamily. Dynamin/Fzo/YdjA family. As to quaternary structure, interacts with ARC5 on peroxisomes and ELM1 on mitochondria.

It is found in the mitochondrion. It localises to the peroxisome. In terms of biological role, involved in the control of mitochondrial and peroxisomal division and morphology. The sequence is that of Dynamin-related protein 3B (DRP3B) from Arabidopsis thaliana (Mouse-ear cress).